The following is a 184-amino-acid chain: dCTP deaminase (184 aa).

Residue 107–112 (KSTYAR) coordinates dCTP. E133 acts as the Proton donor/acceptor in catalysis. Residues Q152, Y166, and Q176 each coordinate dCTP.

Belongs to the dCTP deaminase family. As to quaternary structure, homotrimer.

The catalysed reaction is dCTP + H2O + H(+) = dUTP + NH4(+). Its pathway is pyrimidine metabolism; dUMP biosynthesis; dUMP from dCTP (dUTP route): step 1/2. Catalyzes the deamination of dCTP to dUTP. The sequence is that of dCTP deaminase from Herpetosiphon aurantiacus (strain ATCC 23779 / DSM 785 / 114-95).